We begin with the raw amino-acid sequence, 505 residues long: Serine/threonine protein kinase OSK1 (505 aa).

The Protein kinase domain occupies 14 to 266; the sequence is YRIGKTLGIG…IREIREHQWF (253 aa). ATP contacts are provided by residues 20-28 and lysine 43; that span reads LGIGSFGKV. The active-site Proton acceptor is the aspartate 137. In terms of domain architecture, UBA spans 287 to 327; sequence KLDDETLNDVINMGFDKNQLIESLHKRLQNEATVAYYLLLD. Residues 347 to 361 are compositionally biased toward polar residues; it reads SSLAQVTPAETPNSA. Positions 347-372 are disordered; that stretch reads SSLAQVTPAETPNSATDHRQHGHMES. The KA1 domain maps to 456–504; that stretch reads SEKSTHTVKFEIQLYKTRDEKYLLDLQRVSGPQLLFLDLCSAFLTQLRV.

The protein belongs to the protein kinase superfamily. Ser/Thr protein kinase family. As to expression, expressed in young roots, young shoots, flowers, and immature seeds. Mostly expressed in leaf sheaths and roots, and to a lower extent, in germinating seeds, leaf blades and panicles.

The protein resides in the nucleus. It carries out the reaction L-seryl-[protein] + ATP = O-phospho-L-seryl-[protein] + ADP + H(+). It catalyses the reaction L-threonyl-[protein] + ATP = O-phospho-L-threonyl-[protein] + ADP + H(+). In terms of biological role, serine/threonine-protein kinase involved in sugar signaling during germination and seedling growth. Negative regulators of sugar response complex (SRC) in alpha-amylase gene promoters, thus relieving SRC sugar repression in a MYBS1-dependent manner. Required for MYBS1 and AAMY3 accumulation under glucose starvation. The chain is Serine/threonine protein kinase OSK1 from Oryza sativa subsp. japonica (Rice).